The following is a 476-amino-acid chain: Glutamate--tRNA ligase (476 aa).

Positions Pro9–Thr19 match the 'HIGH' region motif. The 'KMSKS' region motif lies at Lys248–Arg252. Lys251 lines the ATP pocket.

It belongs to the class-I aminoacyl-tRNA synthetase family. Glutamate--tRNA ligase type 1 subfamily. In terms of assembly, monomer.

It is found in the cytoplasm. The enzyme catalyses tRNA(Glu) + L-glutamate + ATP = L-glutamyl-tRNA(Glu) + AMP + diphosphate. Catalyzes the attachment of glutamate to tRNA(Glu) in a two-step reaction: glutamate is first activated by ATP to form Glu-AMP and then transferred to the acceptor end of tRNA(Glu). In Prochlorococcus marinus (strain NATL1A), this protein is Glutamate--tRNA ligase.